The chain runs to 401 residues: MKKMLFTSESVTEGHPDKICDQISDTILDAILEKEPEENKMNARCAVETLVTRGLVVVTGEVRTSAYIDVPTLVRNTILDIGYNRAKFGFDGETCAVITSIEEQSPDIALGVDRSFEVKSKEKEDPFEKIGAGDQGIMFGYATNETDAYMPLPILLAHRLAKRLADVRKSNTLDFLRPDGKTQVTVEYDENNNPVGVETVLISAQHSPDISRQELEEAIKEHVITPVIPENLVTKDTKILVNPTGRFVIGGPQADTGLTGRKIIVDTYGGWAPHGGGAFSGKDPTKVDRSATYMARYVAKNLVASGAADEVLIQLSYAIGVAQPVSINIDTKGTAKVDEEKIYKVVKEIFDFRPAAIISNLNLLQPIYQKTAAYGHFGRKDVEFPWERLDKVKELKAALGL.

His-15 is an ATP binding site. Mg(2+) is bound at residue Asp-17. Glu-48 contributes to the K(+) binding site. Residues Glu-61 and Gln-104 each contribute to the L-methionine site. The interval 104–114 (QSPDIALGVDR) is flexible loop. ATP contacts are provided by residues 179 to 181 (DGK), 246 to 247 (RF), Asp-255, 261 to 262 (RK), Ala-278, and Lys-282. L-methionine is bound at residue Asp-255. Lys-286 is a binding site for L-methionine.

Belongs to the AdoMet synthase family. As to quaternary structure, homotetramer; dimer of dimers. Requires Mg(2+) as cofactor. The cofactor is K(+).

Its subcellular location is the cytoplasm. The catalysed reaction is L-methionine + ATP + H2O = S-adenosyl-L-methionine + phosphate + diphosphate. It functions in the pathway amino-acid biosynthesis; S-adenosyl-L-methionine biosynthesis; S-adenosyl-L-methionine from L-methionine: step 1/1. Functionally, catalyzes the formation of S-adenosylmethionine (AdoMet) from methionine and ATP. The overall synthetic reaction is composed of two sequential steps, AdoMet formation and the subsequent tripolyphosphate hydrolysis which occurs prior to release of AdoMet from the enzyme. The polypeptide is S-adenosylmethionine synthase (Petrotoga mobilis (strain DSM 10674 / SJ95)).